The primary structure comprises 152 residues: Xanthine-guanine phosphoribosyltransferase (152 aa).

Residues 37 to 38, R69, and 88 to 96 contribute to the 5-phospho-alpha-D-ribose 1-diphosphate site; these read RG and DDLVDTGGT. Position 69 (R69) interacts with GMP. D89 provides a ligand contact to Mg(2+). Residues D92 and I135 each coordinate guanine. Positions 92 and 135 each coordinate xanthine. Residues 92–96 and 134–135 contribute to the GMP site; these read DTGGT and WI.

It belongs to the purine/pyrimidine phosphoribosyltransferase family. XGPT subfamily. Homotetramer. Requires Mg(2+) as cofactor.

The protein resides in the cell inner membrane. The catalysed reaction is GMP + diphosphate = guanine + 5-phospho-alpha-D-ribose 1-diphosphate. It catalyses the reaction XMP + diphosphate = xanthine + 5-phospho-alpha-D-ribose 1-diphosphate. It carries out the reaction IMP + diphosphate = hypoxanthine + 5-phospho-alpha-D-ribose 1-diphosphate. It participates in purine metabolism; GMP biosynthesis via salvage pathway; GMP from guanine: step 1/1. It functions in the pathway purine metabolism; XMP biosynthesis via salvage pathway; XMP from xanthine: step 1/1. Its function is as follows. Purine salvage pathway enzyme that catalyzes the transfer of the ribosyl-5-phosphate group from 5-phospho-alpha-D-ribose 1-diphosphate (PRPP) to the N9 position of the 6-oxopurines guanine and xanthine to form the corresponding ribonucleotides GMP (guanosine 5'-monophosphate) and XMP (xanthosine 5'-monophosphate), with the release of PPi. To a lesser extent, also acts on hypoxanthine. The chain is Xanthine-guanine phosphoribosyltransferase from Yersinia pseudotuberculosis serotype O:1b (strain IP 31758).